A 33-amino-acid polypeptide reads, in one-letter code: Gastrin (33 aa).

Position 1 is a pyrrolidone carboxylic acid (Gln1). Sulfotyrosine is present on Tyr28. A Phenylalanine amide modification is found at Phe33.

This sequence belongs to the gastrin/cholecystokinin family. Post-translationally, sulfation enhances proteolytic processing, and blocks peptide degradation. Levels of sulfation differ between proteolytically-cleaved gastrins and between tissues.

The protein resides in the secreted. Functionally, gastrin stimulates the stomach mucosa to produce and secrete hydrochloric acid and the pancreas to secrete its digestive enzymes. It also stimulates smooth muscle contraction and increases blood circulation and water secretion in the stomach and intestine. This Macropus giganteus (Eastern gray kangaroo) protein is Gastrin (GAST).